Reading from the N-terminus, the 505-residue chain is Trans-cinnamate 4-monooxygenase C4H2 (505 aa).

Short sequence motifs (nuclear localization signal) lie at residues Val161–Asn168 and Glu247–Lys254. Cys447 contributes to the heme binding site.

Belongs to the cytochrome P450 family. It depends on heme as a cofactor.

Its subcellular location is the nucleus. It carries out the reaction (E)-cinnamate + reduced [NADPH--hemoprotein reductase] + O2 = (E)-4-coumarate + oxidized [NADPH--hemoprotein reductase] + H2O + H(+). It functions in the pathway phenylpropanoid metabolism; trans-4-coumarate biosynthesis; trans-4-coumarate from trans-cinnamate: step 1/1. Component of the floral volatile benzenoid/phenylpropanoid (FVBP) biosynthetic pathway that controls carbon flux to pigments essential for pollination or UV protection, to numerous pytoalexins synthesized by plants when challenged by pathogens, and to lignins. The protein is Trans-cinnamate 4-monooxygenase C4H2 of Petunia hybrida (Petunia).